The sequence spans 452 residues: Protein EARLY-RESPONSIVE TO DEHYDRATION 7, chloroplastic (452 aa).

Residues 1–18 (MESSGDKQTSSLYPTVDT) are compositionally biased toward polar residues. A chloroplast-targeting transit peptide spans 1-28 (MESSGDKQTSSLYPTVDTSNPEAPINPS). Positions 1-37 (MESSGDKQTSSLYPTVDTSNPEAPINPSSSSSTNNLY) are disordered. A compositionally biased stretch (low complexity) spans 19 to 37 (SNPEAPINPSSSSSTNNLY). One can recognise a Senescence domain in the interval 258 to 426 (IATGSGHLIK…AWVAFKIRKA (169 aa)).

The protein resides in the plastid. It is found in the chloroplast. This Arabidopsis thaliana (Mouse-ear cress) protein is Protein EARLY-RESPONSIVE TO DEHYDRATION 7, chloroplastic.